Reading from the N-terminus, the 244-residue chain is NAD(P)H-quinone oxidoreductase subunit K (244 aa).

[4Fe-4S] cluster is bound by residues Cys51, Cys52, Cys116, and Cys147.

Belongs to the complex I 20 kDa subunit family. In terms of assembly, NDH-1 can be composed of about 15 different subunits; different subcomplexes with different compositions have been identified which probably have different functions. [4Fe-4S] cluster is required as a cofactor.

The protein localises to the cellular thylakoid membrane. It carries out the reaction a plastoquinone + NADH + (n+1) H(+)(in) = a plastoquinol + NAD(+) + n H(+)(out). It catalyses the reaction a plastoquinone + NADPH + (n+1) H(+)(in) = a plastoquinol + NADP(+) + n H(+)(out). In terms of biological role, NDH-1 shuttles electrons from an unknown electron donor, via FMN and iron-sulfur (Fe-S) centers, to quinones in the respiratory and/or the photosynthetic chain. The immediate electron acceptor for the enzyme in this species is believed to be plastoquinone. Couples the redox reaction to proton translocation, and thus conserves the redox energy in a proton gradient. Cyanobacterial NDH-1 also plays a role in inorganic carbon-concentration. The chain is NAD(P)H-quinone oxidoreductase subunit K from Synechococcus sp. (strain JA-2-3B'a(2-13)) (Cyanobacteria bacterium Yellowstone B-Prime).